Consider the following 258-residue polypeptide: HTH-type transcriptional repressor GlcR (258 aa).

The region spanning Gln-3–Leu-58 is the HTH deoR-type domain. A DNA-binding region (H-T-H motif) is located at residues Ile-20–Asp-39.

Plays a role in carbon catabolite repression (CCR). Specifically required for transcriptional repression of the levanase operon by glucose but not by other sugars. The chain is HTH-type transcriptional repressor GlcR (glcR) from Bacillus subtilis (strain 168).